Reading from the N-terminus, the 412-residue chain is Divalent metal cation transporter MntH (412 aa).

Residues 1–19 (MTNYRVESSSGRAARKMRL) are Cytoplasmic-facing. Residues 20–39 (ALMGPAFIAAIGYIDPGNFA) traverse the membrane as a helical segment. Over 40–51 (TNIQAGASFGYQ) the chain is Periplasmic. Residues 52-71 (LLWVVVWANLMAMLIQILSA) form a helical membrane-spanning segment. Topologically, residues 72 to 95 (KLGIATGKNLAEQIRDHYPRPFVW) are cytoplasmic. The helical transmembrane segment at 96 to 118 (FYWVQAEIIAMATDLAEFIGAAI) threads the bilayer. Over 119–125 (GFKLILG) the chain is Periplasmic. A helical membrane pass occupies residues 126–145 (VSLLQGAVLTGIATFLILML). At 146-155 (QRRGQKPLEK) the chain is on the cytoplasmic side. Residues 156–175 (VIGGLLLFVAAAYIVELIFS) form a helical membrane-spanning segment. Over 176-196 (QPNLAQLGKGMVIPSLPTSEA) the chain is Periplasmic. A helical membrane pass occupies residues 197–220 (VFLAAGVLGATIMPHVIYLHSSLT). Residues 221 to 238 (QHLHGGSRQQRYSATKWD) lie on the Cytoplasmic side of the membrane. Residues 239-258 (VAIAMTIAGFVNLAMMATAA) form a helical membrane-spanning segment. Residues 259 to 276 (AAFHFSGHTGVADLDEAY) lie on the Periplasmic side of the membrane. Residues 277–297 (LTLQPLLSHAAATVFGLSLVA) form a helical membrane-spanning segment. The Cytoplasmic segment spans residues 298–327 (AGLSSTVVGTLAGQVVMQGFIRFHIPLWVR). Residues 328–344 (RTVTMLPSFIVILMGLD) traverse the membrane as a helical segment. Residues 345-350 (PTRILV) lie on the Periplasmic side of the membrane. A helical transmembrane segment spans residues 351–370 (MSQVLLSFGIALALVPLLIF). Topologically, residues 371–387 (TSDSKLMGDLVNSKRVK) are cytoplasmic. A helical membrane pass occupies residues 388–406 (QTGWVIVVLVVALNIWLLV). The Periplasmic segment spans residues 407 to 412 (GTALGL).

The protein belongs to the NRAMP family.

The protein resides in the cell inner membrane. H(+)-stimulated, divalent metal cation uptake system. This Escherichia coli O127:H6 (strain E2348/69 / EPEC) protein is Divalent metal cation transporter MntH.